Here is a 613-residue protein sequence, read N- to C-terminus: 4-hydroxy-3-methylbut-2-en-1-yl diphosphate synthase (flavodoxin) (613 aa).

The [4Fe-4S] cluster site is built by C514, C517, C548, and E555.

This sequence belongs to the IspG family. It depends on [4Fe-4S] cluster as a cofactor.

The catalysed reaction is (2E)-4-hydroxy-3-methylbut-2-enyl diphosphate + oxidized [flavodoxin] + H2O + 2 H(+) = 2-C-methyl-D-erythritol 2,4-cyclic diphosphate + reduced [flavodoxin]. It participates in isoprenoid biosynthesis; isopentenyl diphosphate biosynthesis via DXP pathway; isopentenyl diphosphate from 1-deoxy-D-xylulose 5-phosphate: step 5/6. Its function is as follows. Converts 2C-methyl-D-erythritol 2,4-cyclodiphosphate (ME-2,4cPP) into 1-hydroxy-2-methyl-2-(E)-butenyl 4-diphosphate. In Chlamydia pneumoniae (Chlamydophila pneumoniae), this protein is 4-hydroxy-3-methylbut-2-en-1-yl diphosphate synthase (flavodoxin).